The sequence spans 64 residues: Large ribosomal subunit protein bL35 (64 aa).

This sequence belongs to the bacterial ribosomal protein bL35 family.

In Chloroherpeton thalassium (strain ATCC 35110 / GB-78), this protein is Large ribosomal subunit protein bL35.